A 740-amino-acid chain; its full sequence is Elongation factor 2 (740 aa).

The region spanning 23–264 is the tr-type G domain; that stretch reads AQIRNAGTLA…MIIEHVPPPN (242 aa). GTP contacts are provided by residues 32–39, 98–102, and 152–155; these read AHVDHGKT, DTPGH, and NKID. His-605 carries the post-translational modification Diphthamide.

Belongs to the TRAFAC class translation factor GTPase superfamily. Classic translation factor GTPase family. EF-G/EF-2 subfamily.

It localises to the cytoplasm. Functionally, catalyzes the GTP-dependent ribosomal translocation step during translation elongation. During this step, the ribosome changes from the pre-translocational (PRE) to the post-translocational (POST) state as the newly formed A-site-bound peptidyl-tRNA and P-site-bound deacylated tRNA move to the P and E sites, respectively. Catalyzes the coordinated movement of the two tRNA molecules, the mRNA and conformational changes in the ribosome. In Pyrobaculum calidifontis (strain DSM 21063 / JCM 11548 / VA1), this protein is Elongation factor 2.